A 230-amino-acid chain; its full sequence is 7-cyano-7-deazaguanine synthase (230 aa).

8–18 (LSGGMDSAVVT) is a binding site for ATP. Residues C186, C196, C199, and C202 each coordinate Zn(2+).

The protein belongs to the QueC family. Zn(2+) is required as a cofactor.

It carries out the reaction 7-carboxy-7-deazaguanine + NH4(+) + ATP = 7-cyano-7-deazaguanine + ADP + phosphate + H2O + H(+). It participates in purine metabolism; 7-cyano-7-deazaguanine biosynthesis. Catalyzes the ATP-dependent conversion of 7-carboxy-7-deazaguanine (CDG) to 7-cyano-7-deazaguanine (preQ(0)). This Xylella fastidiosa (strain M12) protein is 7-cyano-7-deazaguanine synthase.